The primary structure comprises 80 residues: Adipogenin (80 aa).

Residues F14–W34 form a helical membrane-spanning segment.

It belongs to the adipogenin family.

Its subcellular location is the membrane. The protein resides in the nucleus. Its function is as follows. Plays a role in stimulating adipocyte differentiation and development. The chain is Adipogenin from Homo sapiens (Human).